The chain runs to 331 residues: Anthranilate phosphoribosyltransferase (331 aa).

Residues glycine 79, 82 to 83 (GD), threonine 87, 89 to 92 (NVST), 107 to 115 (KHGNYGVSS), and serine 119 each bind 5-phospho-alpha-D-ribose 1-diphosphate. Glycine 79 contributes to the anthranilate binding site. Serine 91 is a Mg(2+) binding site. Anthranilate is bound at residue asparagine 110. Arginine 165 contributes to the anthranilate binding site. Mg(2+)-binding residues include aspartate 223 and glutamate 224.

This sequence belongs to the anthranilate phosphoribosyltransferase family. As to quaternary structure, homodimer. Requires Mg(2+) as cofactor.

The catalysed reaction is N-(5-phospho-beta-D-ribosyl)anthranilate + diphosphate = 5-phospho-alpha-D-ribose 1-diphosphate + anthranilate. The protein operates within amino-acid biosynthesis; L-tryptophan biosynthesis; L-tryptophan from chorismate: step 2/5. Its function is as follows. Catalyzes the transfer of the phosphoribosyl group of 5-phosphorylribose-1-pyrophosphate (PRPP) to anthranilate to yield N-(5'-phosphoribosyl)-anthranilate (PRA). The protein is Anthranilate phosphoribosyltransferase of Christiangramia forsetii (strain DSM 17595 / CGMCC 1.15422 / KT0803) (Gramella forsetii).